A 768-amino-acid chain; its full sequence is ATP-dependent zinc metalloprotease FtsH (768 aa).

Topologically, residues 1–33 (MADRDKNDIRKRLEELRKDNNRRNNRQDNGNRS) are cytoplasmic. The chain crosses the membrane as a helical span at residues 34 to 54 (PFSGFLFFIFVILLFTFTLLF). The Periplasmic segment spans residues 55–139 (HRDIQTYFQE…KLNSLQPSGG (85 aa)). Residues 140–160 (GFFLLLLGQFLPMIIMIGLMV) form a helical membrane-spanning segment. The Cytoplasmic portion of the chain corresponds to 161–768 (YLAKKMVGGS…SNFKLPSFME (608 aa)). Position 238–245 (238–245 (GRPGTGKT)) interacts with ATP. His461 is a Zn(2+) binding site. Glu462 is a catalytic residue. The Zn(2+) site is built by His465 and Asp536. Residues 647-768 (EESIQKGSEG…SNFKLPSFME (122 aa)) are disordered. The segment covering 669–698 (QENKTVEAEVHDSNLKSDTEKLAEAVREIT) has biased composition (basic and acidic residues). The span at 715–731 (KDSDDNEKNDDDNENSD) shows a compositional bias: acidic residues.

This sequence in the central section; belongs to the AAA ATPase family. It in the C-terminal section; belongs to the peptidase M41 family. In terms of assembly, homohexamer. Zn(2+) serves as cofactor.

It is found in the cell inner membrane. Its function is as follows. Acts as a processive, ATP-dependent zinc metallopeptidase for both cytoplasmic and membrane proteins. Plays a role in the quality control of integral membrane proteins. This Leptotrichia buccalis (strain ATCC 14201 / DSM 1135 / JCM 12969 / NCTC 10249 / C-1013-b) protein is ATP-dependent zinc metalloprotease FtsH.